A 28-amino-acid polypeptide reads, in one-letter code: U15-ctenitoxin-Co1a (28 aa).

2 cysteine pairs are disulfide-bonded: Cys3/Cys17 and Cys10/Cys22.

As to expression, expressed by the venom gland.

Its subcellular location is the secreted. Insecticidal neurotoxin that reversibly inhibits the N-methyl-D-aspartate (NMDA)-subtype of ionotropic glutamate receptor (GRIN) and inhibits inactivation of insect sodium channels (Nav). In vivo, is highly toxic to insects. In Ctenus ornatus (Brazilian spider), this protein is U15-ctenitoxin-Co1a.